The following is a 773-amino-acid chain: ATP-dependent permease MDL2, mitochondrial (773 aa).

A mitochondrion-targeting transit peptide spans 1–90 (MLNGRLPLLR…SPISKGSARS (90 aa)). Over residues 73–84 (PETSLPSASPIS) the composition is skewed to polar residues. A disordered region spans residues 73-95 (PETSLPSASPISKGSARSAHAKE). In terms of domain architecture, ABC transmembrane type-1 spans 119-413 (LLTAILLLTI…LSTFYSEIMQ (295 aa)). Helical transmembrane passes span 123 to 143 (ILLL…IGIV), 170 to 192 (FLSF…FILL), and 257 to 277 (VVGV…LLFF). Residue 481–488 (GPSGRGKS) coordinates ATP. In terms of domain architecture, ABC transporter spans 493-733 (LLLRYYNPTT…DDNDNNHDND (241 aa)). Composition is skewed to basic and acidic residues over residues 706-733 (KEDL…HDND) and 740-762 (ETKD…DAAK). The segment at 706 to 773 (KEDLNESKEH…ANPIKITPQP (68 aa)) is disordered.

This sequence belongs to the ABC transporter superfamily. ABCB family. Mitochondrial peptide exporter (TC 3.A.1.212) subfamily.

It localises to the mitochondrion inner membrane. The polypeptide is ATP-dependent permease MDL2, mitochondrial (MDL2) (Saccharomyces cerevisiae (strain ATCC 204508 / S288c) (Baker's yeast)).